The chain runs to 463 residues: Metalloprotease slr0863 (463 aa).

This sequence belongs to the peptidase U62 family.

Functionally, probable metalloprotease. In Synechocystis sp. (strain ATCC 27184 / PCC 6803 / Kazusa), this protein is Metalloprotease slr0863.